We begin with the raw amino-acid sequence, 234 residues long: uncharacterized protein (234 aa).

Residues 62 to 99 (NEESISDLNSDNPGNSEPSDVESFVLSDEDENSEKDFS) are disordered. Positions 67-79 (SDLNSDNPGNSEP) are enriched in polar residues.

This is an uncharacterized protein from Acanthamoeba polyphaga (Amoeba).